The primary structure comprises 242 residues: Pyridoxine 5'-phosphate synthase (242 aa).

Asparagine 6 is a 3-amino-2-oxopropyl phosphate binding site. 8–9 (DH) serves as a coordination point for 1-deoxy-D-xylulose 5-phosphate. Arginine 17 lines the 3-amino-2-oxopropyl phosphate pocket. Residue histidine 42 is the Proton acceptor of the active site. 2 residues coordinate 1-deoxy-D-xylulose 5-phosphate: arginine 44 and histidine 49. The active-site Proton acceptor is the glutamate 69. A 1-deoxy-D-xylulose 5-phosphate-binding site is contributed by threonine 99. Histidine 193 (proton donor) is an active-site residue. Residues glycine 194 and 217–218 (GH) each bind 3-amino-2-oxopropyl phosphate.

It belongs to the PNP synthase family. As to quaternary structure, homooctamer; tetramer of dimers.

Its subcellular location is the cytoplasm. The enzyme catalyses 3-amino-2-oxopropyl phosphate + 1-deoxy-D-xylulose 5-phosphate = pyridoxine 5'-phosphate + phosphate + 2 H2O + H(+). The protein operates within cofactor biosynthesis; pyridoxine 5'-phosphate biosynthesis; pyridoxine 5'-phosphate from D-erythrose 4-phosphate: step 5/5. Catalyzes the complicated ring closure reaction between the two acyclic compounds 1-deoxy-D-xylulose-5-phosphate (DXP) and 3-amino-2-oxopropyl phosphate (1-amino-acetone-3-phosphate or AAP) to form pyridoxine 5'-phosphate (PNP) and inorganic phosphate. The protein is Pyridoxine 5'-phosphate synthase of Aquifex aeolicus (strain VF5).